The following is a 936-amino-acid chain: Probable outer membrane protein pmp7 (936 aa).

The first 23 residues, 1–23 (MKSSVSWLFFSSIPLFSSLSIVA), serve as a signal peptide directing secretion. Residues 636–936 (GEPFERELWL…NTNLGSKFCF (301 aa)) enclose the Autotransporter domain.

It belongs to the PMP outer membrane protein family.

It localises to the secreted. It is found in the cell wall. The protein localises to the cell outer membrane. This Chlamydia pneumoniae (Chlamydophila pneumoniae) protein is Probable outer membrane protein pmp7 (pmp7).